Here is a 212-residue protein sequence, read N- to C-terminus: Probable octanoyltransferase (212 aa).

Residues 28–199 (GVSEEMILVT…NLETLLQRQE (172 aa)) enclose the BPL/LPL catalytic domain. Residues 66–73 (RGGDATYH), 130–132 (SVG), and 143–145 (GVA) contribute to the substrate site. Residue C161 is the Acyl-thioester intermediate of the active site.

This sequence belongs to the LipB family.

It is found in the cytoplasm. It catalyses the reaction octanoyl-[ACP] + L-lysyl-[protein] = N(6)-octanoyl-L-lysyl-[protein] + holo-[ACP] + H(+). It functions in the pathway protein modification; protein lipoylation via endogenous pathway; protein N(6)-(lipoyl)lysine from octanoyl-[acyl-carrier-protein]: step 1/2. In terms of biological role, catalyzes the transfer of endogenously produced octanoic acid from octanoyl-acyl-carrier-protein onto the lipoyl domains of lipoate-dependent enzymes. Lipoyl-ACP can also act as a substrate although octanoyl-ACP is likely to be the physiological substrate. The chain is Probable octanoyltransferase from Pyrobaculum arsenaticum (strain DSM 13514 / JCM 11321 / PZ6).